We begin with the raw amino-acid sequence, 328 residues long: Tetraacyldisaccharide 4'-kinase (328 aa).

59–66 is an ATP binding site; sequence TAGGNGKT.

It belongs to the LpxK family.

The catalysed reaction is a lipid A disaccharide + ATP = a lipid IVA + ADP + H(+). It participates in glycolipid biosynthesis; lipid IV(A) biosynthesis; lipid IV(A) from (3R)-3-hydroxytetradecanoyl-[acyl-carrier-protein] and UDP-N-acetyl-alpha-D-glucosamine: step 6/6. In terms of biological role, transfers the gamma-phosphate of ATP to the 4'-position of a tetraacyldisaccharide 1-phosphate intermediate (termed DS-1-P) to form tetraacyldisaccharide 1,4'-bis-phosphate (lipid IVA). The protein is Tetraacyldisaccharide 4'-kinase of Aliivibrio fischeri (strain ATCC 700601 / ES114) (Vibrio fischeri).